The following is a 612-amino-acid chain: Putative zinc metalloproteinase C607.06c (612 aa).

Zn(2+) is bound at residue H303. E304 is an active-site residue. 2 residues coordinate Zn(2+): H307 and H313. The 136-residue stretch at V477 to K612 folds into the Jacalin-type lectin domain.

It belongs to the peptidase M10B family. The cofactor is Zn(2+).

The polypeptide is Putative zinc metalloproteinase C607.06c (Schizosaccharomyces pombe (strain 972 / ATCC 24843) (Fission yeast)).